We begin with the raw amino-acid sequence, 647 residues long: MGRIHVLSEHVANKIAAGEVVERPASVVKELIENSLDAGAKRIRVHVEAGGKKLIHIVDDGIGMFRDDAMLAFERHATSKLKNPEDLLSISTLGFRGEALPSIASVARVRLETRANEEPSGTVLEIAGGKILKIEEAGLPLGTSIAIKDLFFNTPARKKFLKSESTELSHIASLVTHYALAHPEMHWELHSATNALLIAPPVATQSERIYQVFGNETLDQLIPLAAQIKLERIGLPKPPPWLRKNEDDEEEQTVEPGEVRLHGFISKPEIQKLNRNSIFVFVNGRLIRDRLVQHALTEAYRNILPPTLFPVVLLFLEMPYTEVDVNVHPSKTEVRFRQQSLVHDFVRDSVRAALSKARPIPQFISEIHAQPKASPSLTPGAQTAPAFALEAQEEPVLPERLQFGGDAISVEANAAVPVARFGAQTFGSHVAQQQTVPETSGCDYELPDLPAADAPLASLRPLGQIRESFILATSNEGLWIIDQHVAHERVLFEKVLKQRAAASVETQQLLMPLIVELTPGQQAVFTEIAEELHQNGFEVEPFGSRTFAVKAAPAGIRAEDIEKTLSEVLDSFEREQQAFNLEHAQSRIAATIACHAAIKVNMPLTQDKMEWLLAELAKTEHPMTCPHGRPIVLRYSVKDIQKAFKRI.

This sequence belongs to the DNA mismatch repair MutL/HexB family.

In terms of biological role, this protein is involved in the repair of mismatches in DNA. It is required for dam-dependent methyl-directed DNA mismatch repair. May act as a 'molecular matchmaker', a protein that promotes the formation of a stable complex between two or more DNA-binding proteins in an ATP-dependent manner without itself being part of a final effector complex. In Koribacter versatilis (strain Ellin345), this protein is DNA mismatch repair protein MutL.